Here is a 633-residue protein sequence, read N- to C-terminus: MKTGRTRPLRVFDILVPPWPPTVPHRIKLPRGKTNWFEFYSAITRNWNKLKGLKNCWQIWKDVQEIIRRIRKYQGESTVMQGPGNNDGAHPYATMAGKLDSKLLQALKVMEFEYMTPVQHRVLTELPSWRSDCLVQAKTGTGKTLAFLLPTLHCLLQGHSAPPRGQVAILIITPTRELAQQIAKSCDQLTSQLARPLECHIAVGGTARASALARFMKGAPSILVATPGRLKDYLSEPSTAEKLSNIQTLILDEADTMLESGFLADVKRILQLIPPKSTGWQGMCFSATVPPKVKDVVSVVLKPGYTSISTIEKNETPTHERVPQYHVLIPSVADTFTTLASLLNLEIKNSSKIIVFGVTANMVALFAAAFSQGLTPLKVFEIHSRLSQSARTKTTALFKEAATGIMFASDVIGRGMDFPNVDLVIQVGLPSNGEQYVHRVGRTARAGNDGRAIILLTEAESFFMKVNRHLPIQPHPQTDAINAGASSCADAVTKAMYSIGEETKQRAYSSYIGFFAGSGLLKQVRLDKPGLVQLANELAIQGMGCPEPPPMDKKVVGKMGLKGVPGFNYATGNDLNGDRPARPRGRPGNKTRDVLSPGAGQGDRRGSVSKNRGGRRGGGRGGRGGRGGKPRAA.

The N-terminal 32 residues, 1-32, are a transit peptide targeting the mitochondrion; that stretch reads MKTGRTRPLRVFDILVPPWPPTVPHRIKLPRG. The Q motif signature appears at 38-66; sequence EFYSAITRNWNKLKGLKNCWQIWKDVQEI. The Helicase ATP-binding domain maps to 70-248; that stretch reads IRKYQGESTV…TAEKLSNIQT (179 aa). 83–90 provides a ligand contact to ATP; that stretch reads PGNNDGAH. Positions 195–198 match the DEAD box motif; the sequence is RPLE. The Helicase C-terminal domain occupies 262–429; that stretch reads FLADVKRILQ…NVDLVIQVGL (168 aa). The tract at residues 567 to 633 is disordered; it reads FNYATGNDLN…GGRGGKPRAA (67 aa).

This sequence belongs to the DEAD box helicase family. DDX18/HAS1 subfamily.

The protein localises to the mitochondrion matrix. It catalyses the reaction ATP + H2O = ADP + phosphate + H(+). In terms of biological role, ATP-dependent RNA helicase required for mitochondrial splicing of group I and II introns. Also required for efficient mitochondrial translation. In Aspergillus oryzae (strain ATCC 42149 / RIB 40) (Yellow koji mold), this protein is ATP-dependent RNA helicase mss116, mitochondrial (mss116).